Consider the following 1494-residue polypeptide: Serine/threonine-protein kinase VPS15 (1494 aa).

Residue Gly-2 is the site of N-myristoyl glycine attachment. The Protein kinase domain occupies 27-307 (LVLKEVLGRG…VFPNYFSPFL (281 aa)). ATP-binding positions include 33–41 (LGRGRFLKS) and Lys-54. The Proton acceptor role is filled by Asp-149. HEAT repeat units lie at residues 383-421 (NSKD…LYDS), 480-517 (DRLQ…LVRD), 524-562 (KIFP…TAYG), 610-646 (KTIA…FFGQ), 648-685 (QSND…FVGQ), 687-724 (SVEE…SSFL), and 727-764 (RALL…CLGA). Disordered regions lie at residues 859 to 903 (QSVE…TVEL) and 1037 to 1064 (SASV…SVPD). The segment covering 1037-1047 (SASVTSEDASS) has biased composition (low complexity). WD repeat units follow at residues 1079–1118 (EHRS…KDIS), 1127–1166 (LEGS…RGLG), 1184–1226 (KEGA…DAWT), 1231–1270 (PEEG…PVNS), 1276–1323 (ICPI…CHQV), 1371–1409 (PRLP…RSYC), and 1466–1494 (DSVQ…KVWK).

The protein belongs to the protein kinase superfamily. Ser/Thr protein kinase family. Interacts with VPS34. Component of a complex made of VPS38/USL1 and PI3K main subunits such as VPS15, ATG6/VPS30 and VPS34. Autophosphorylated. As to expression, mainly expressed in anthers, pollen grains and pollen tubes, and, to a lower extent, in other tissues and organs including seedlings, roots, stems, leaves, flowers, pitils and siliques.

It localises to the cytoplasm. The protein localises to the golgi apparatus. It is found in the trans-Golgi network membrane. Its subcellular location is the endosome membrane. It catalyses the reaction L-seryl-[protein] + ATP = O-phospho-L-seryl-[protein] + ADP + H(+). The enzyme catalyses L-threonyl-[protein] + ATP = O-phospho-L-threonyl-[protein] + ADP + H(+). Functionally, serine/threonine-protein kinase required for cytoplasm to vacuole transport (Cvt) and autophagy as a part of the autophagy-specific VPS34 PI3-kinase complex I. Required for pollen development and germination, probably via the modulation of phosphatidylinositol 3-phosphate (PI3P) formation and vacuolar organization. This chain is Serine/threonine-protein kinase VPS15, found in Arabidopsis thaliana (Mouse-ear cress).